The following is a 319-amino-acid chain: MPDAAAAAAAAQDADAVMRDAPADAAAGGGDNNDDDGDDGTEEDEEEDDDEEGDEEELPPAEDPAAPEPVSALLPGSPNQLTLLFQGEVYVFESVTPEKVQAVLLLLGSCEMPPGLANMVLPNQRENRGYDDLLQRTDIPAKRVASLIRFREKRKERNFDKKIRYAVRKEVALRMQRRKGQFAGRANMEGESLSPGCELASQGSGQDFLSRESKCQNCGTSEKMTPAMRRGPAGPRTLCNACGLMWANKGTLRNCPKAKVESSVVATEQSNAAVSPSGIDNKELVVPNPENITASHGEVMGDSTPANEAEIGAPKAQSQ.

Residues 1 to 15 (MPDAAAAAAAAQDAD) are compositionally biased toward low complexity. Residues 1 to 74 (MPDAAAAAAA…AAPEPVSALL (74 aa)) are disordered. Acidic residues predominate over residues 32–60 (NNDDDGDDGTEEDEEEDDDEEGDEEELPP). The 36-residue stretch at 74 to 109 (LPGSPNQLTLLFQGEVYVFESVTPEKVQAVLLLLGS) folds into the Tify domain. The CCT domain maps to 143 to 185 (RVASLIRFREKRKERNFDKKIRYAVRKEVALRMQRRKGQFAGR). The GATA-type zinc-finger motif lies at 215–242 (CQNCGTSEKMTPAMRRGPAGPRTLCNAC). The interval 292–319 (ITASHGEVMGDSTPANEAEIGAPKAQSQ) is disordered.

Belongs to the type IV zinc-finger family. Class C subfamily.

Its subcellular location is the nucleus. Functionally, transcriptional activator that specifically binds 5'-GATA-3' or 5'-GAT-3' motifs within gene promoters. This is GATA transcription factor 18 from Oryza sativa subsp. indica (Rice).